The primary structure comprises 117 residues: Large ribosomal subunit protein uL18 (117 aa).

Belongs to the universal ribosomal protein uL18 family. Part of the 50S ribosomal subunit; part of the 5S rRNA/L5/L18/L25 subcomplex. Contacts the 5S and 23S rRNAs.

Functionally, this is one of the proteins that bind and probably mediate the attachment of the 5S RNA into the large ribosomal subunit, where it forms part of the central protuberance. The polypeptide is Large ribosomal subunit protein uL18 (Pectobacterium carotovorum subsp. carotovorum (strain PC1)).